We begin with the raw amino-acid sequence, 185 residues long: Ribosome-recycling factor (185 aa).

Belongs to the RRF family.

It is found in the cytoplasm. Functionally, responsible for the release of ribosomes from messenger RNA at the termination of protein biosynthesis. May increase the efficiency of translation by recycling ribosomes from one round of translation to another. The protein is Ribosome-recycling factor of Dehalococcoides mccartyi (strain ATCC BAA-2266 / KCTC 15142 / 195) (Dehalococcoides ethenogenes (strain 195)).